Reading from the N-terminus, the 1500-residue chain is Myosin-8 (1500 aa).

The 50-residue stretch at 8 to 57 (AVGSHVWVEDPDEAWLDGEVVEINGDQIKVLCASGKQVVVKDSNIYPKDV) folds into the Myosin N-terminal SH3-like domain. Residues 62–732 (SGVEDMTRLA…QMADLDTRRT (671 aa)) form the Myosin motor domain. ATP contacts are provided by residues 156-163 (GESGAGKT) and 210-218 (NNNSSRFGK). 4 actin-binding regions span residues 496 to 530 (LIEK…YQTY), 532 to 555 (NHKR…AGDV), 590 to 613 (FPPV…KQQL), and 613 to 635 (LVSL…KPNN). 6 IQ domains span residues 735–764 (LGRS…SATQ), 758–787 (LRIS…EAAA), 783–812 (REAA…ATIL), 806–835 (LFSA…TKAA), 831–860 (QTKA…AAIT), and 854–883 (LKKA…AARE). The stretch at 884 to 1049 (TGALQEAKNK…TEKQIMLQQT (166 aa)) forms a coiled coil. In terms of domain architecture, Dilute spans 1146–1447 (DRLIEMIGSA…ISSMRALMTE (302 aa)).

It belongs to the TRAFAC class myosin-kinesin ATPase superfamily. Myosin family. Plant myosin class XI subfamily. Homodimer.

It localises to the cytoplasm. Myosin heavy chain that is required for the cell cycle-regulated transport of various organelles and proteins for their segregation. Functions by binding with its tail domain to receptor proteins on organelles and exerting force with its N-terminal motor domain against actin filaments, thereby transporting its cargo along polarized actin cables. This is Myosin-8 (XI-B) from Arabidopsis thaliana (Mouse-ear cress).